Reading from the N-terminus, the 297-residue chain is tRNA pseudouridine synthase B (297 aa).

D44 serves as the catalytic Nucleophile.

It belongs to the pseudouridine synthase TruB family. Type 1 subfamily.

The enzyme catalyses uridine(55) in tRNA = pseudouridine(55) in tRNA. In terms of biological role, responsible for synthesis of pseudouridine from uracil-55 in the psi GC loop of transfer RNAs. The polypeptide is tRNA pseudouridine synthase B (Corynebacterium glutamicum (strain ATCC 13032 / DSM 20300 / JCM 1318 / BCRC 11384 / CCUG 27702 / LMG 3730 / NBRC 12168 / NCIMB 10025 / NRRL B-2784 / 534)).